Here is a 184-residue protein sequence, read N- to C-terminus: GMP synthase [glutamine-hydrolyzing] subunit A (184 aa).

The Glutamine amidotransferase type-1 domain occupies 3–184 (PICVVNNYGQ…YENFDAICTE (182 aa)). Cysteine 75 acts as the Nucleophile in catalysis. Residues histidine 162 and glutamate 164 contribute to the active site.

In terms of assembly, heterodimer composed of a glutamine amidotransferase subunit (A) and a GMP-binding subunit (B).

The catalysed reaction is XMP + L-glutamine + ATP + H2O = GMP + L-glutamate + AMP + diphosphate + 2 H(+). It participates in purine metabolism; GMP biosynthesis; GMP from XMP (L-Gln route): step 1/1. Its function is as follows. Catalyzes the synthesis of GMP from XMP. This is GMP synthase [glutamine-hydrolyzing] subunit A from Methanoregula boonei (strain DSM 21154 / JCM 14090 / 6A8).